We begin with the raw amino-acid sequence, 330 residues long: Biotin synthase (330 aa).

Positions 42 to 268 constitute a Radical SAM core domain; that stretch reads YYGRKVKLNM…INPSKEIRIA (227 aa). Residues Cys-60, Cys-64, and Cys-67 each coordinate [4Fe-4S] cluster. Cys-103, Cys-136, Cys-196, and Arg-266 together coordinate [2Fe-2S] cluster.

The protein belongs to the radical SAM superfamily. Biotin synthase family. As to quaternary structure, homodimer. The cofactor is [4Fe-4S] cluster. [2Fe-2S] cluster serves as cofactor.

The catalysed reaction is (4R,5S)-dethiobiotin + (sulfur carrier)-SH + 2 reduced [2Fe-2S]-[ferredoxin] + 2 S-adenosyl-L-methionine = (sulfur carrier)-H + biotin + 2 5'-deoxyadenosine + 2 L-methionine + 2 oxidized [2Fe-2S]-[ferredoxin]. It participates in cofactor biosynthesis; biotin biosynthesis; biotin from 7,8-diaminononanoate: step 2/2. Catalyzes the conversion of dethiobiotin (DTB) to biotin by the insertion of a sulfur atom into dethiobiotin via a radical-based mechanism. The polypeptide is Biotin synthase (Macrococcus caseolyticus (strain JCSC5402) (Macrococcoides caseolyticum)).